A 455-amino-acid chain; its full sequence is Golgi pH regulator (455 aa).

The next 2 helical transmembrane spans lie at 5 to 25 and 46 to 66; these read IDSSIMVTSQVLFFGFGWLFF and VTFAFSCTMFELIIFEILGVL. Asn-67 carries N-linked (GlcNAc...) asparagine glycosylation. 3 helical membrane passes run 79 to 99, 111 to 131, and 150 to 170; these read LCVILLILVFMVPFYIGYFVV, LFACVLWLTFMYFFWKLGDPF, and VGVIGVTLMALLSGFGAVNCP. 2 N-linked (GlcNAc...) asparagine glycosylation sites follow: Asn-180 and Asn-243. A run of 4 helical transmembrane segments spans residues 290–310, 343–363, 378–398, and 425–445; these read GYFFSIYCVWKIFMATINIVF, ISFILVGIIIVTSIRGLLITL, VIVLLLAQIMGMYFVSSVLLI, and WFDVIFLVSALSSILFLYLAH.

It belongs to the Golgi pH regulator (TC 1.A.38) family. Homotrimer.

The protein resides in the golgi apparatus membrane. It carries out the reaction iodide(out) = iodide(in). The catalysed reaction is chloride(in) = chloride(out). It catalyses the reaction bromide(in) = bromide(out). The enzyme catalyses fluoride(in) = fluoride(out). Voltage-gated channel that enables the transfer of anions such as iodide, chloride, bromide and fluoride which may function in counter-ion conductance and participates in Golgi acidification. The sequence is that of Golgi pH regulator from Gallus gallus (Chicken).